A 485-amino-acid chain; its full sequence is Aspartyl/glutamyl-tRNA(Asn/Gln) amidotransferase subunit B (485 aa).

Belongs to the GatB/GatE family. GatB subfamily. Heterotrimer of A, B and C subunits.

It catalyses the reaction L-glutamyl-tRNA(Gln) + L-glutamine + ATP + H2O = L-glutaminyl-tRNA(Gln) + L-glutamate + ADP + phosphate + H(+). The enzyme catalyses L-aspartyl-tRNA(Asn) + L-glutamine + ATP + H2O = L-asparaginyl-tRNA(Asn) + L-glutamate + ADP + phosphate + 2 H(+). Allows the formation of correctly charged Asn-tRNA(Asn) or Gln-tRNA(Gln) through the transamidation of misacylated Asp-tRNA(Asn) or Glu-tRNA(Gln) in organisms which lack either or both of asparaginyl-tRNA or glutaminyl-tRNA synthetases. The reaction takes place in the presence of glutamine and ATP through an activated phospho-Asp-tRNA(Asn) or phospho-Glu-tRNA(Gln). The sequence is that of Aspartyl/glutamyl-tRNA(Asn/Gln) amidotransferase subunit B from Ruminiclostridium cellulolyticum (strain ATCC 35319 / DSM 5812 / JCM 6584 / H10) (Clostridium cellulolyticum).